The sequence spans 389 residues: Chalcone synthase 2 (389 aa).

Cysteine 164 is a catalytic residue.

Belongs to the thiolase-like superfamily. Chalcone/stilbene synthases family.

It carries out the reaction (E)-4-coumaroyl-CoA + 3 malonyl-CoA + 3 H(+) = 2',4,4',6'-tetrahydroxychalcone + 3 CO2 + 4 CoA. The protein operates within secondary metabolite biosynthesis; flavonoid biosynthesis. Its function is as follows. The primary product of this enzyme is 4,2',4',6'-tetrahydroxychalcone (also termed naringenin-chalcone or chalcone) which can under specific conditions spontaneously isomerize into naringenin. The chain is Chalcone synthase 2 (CHS2) from Solanum lycopersicum (Tomato).